A 550-amino-acid polypeptide reads, in one-letter code: Hydroxylamine reductase (550 aa).

Residues C3, C6, C18, and C25 each contribute to the [2Fe-2S] cluster site. Residues H249, E273, C317, C405, C433, C458, E492, and K494 each contribute to the hybrid [4Fe-2O-2S] cluster site. At C405 the chain carries Cysteine persulfide.

Belongs to the HCP family. Requires [2Fe-2S] cluster as cofactor. It depends on hybrid [4Fe-2O-2S] cluster as a cofactor.

It is found in the cytoplasm. The enzyme catalyses A + NH4(+) + H2O = hydroxylamine + AH2 + H(+). In terms of biological role, catalyzes the reduction of hydroxylamine to form NH(3) and H(2)O. This Escherichia coli O6:K15:H31 (strain 536 / UPEC) protein is Hydroxylamine reductase.